The sequence spans 175 residues: Alpha-crystallin B chain (175 aa).

M1 is modified (N-acetylmethionine). The residue at position 19 (S19) is a Phosphoserine. O-linked (GlcNAc) serine glycosylation is present at S41. S45 and S59 each carry phosphoserine. Residues 56–164 enclose the sHSP domain; the sequence is RAPSWIDTGL…PERTIPITRE (109 aa). H83 provides a ligand contact to Zn(2+). K92 bears the N6-acetyllysine mark. Residues H104, E106, H111, and H119 each coordinate Zn(2+). Residues 142-175 form a disordered region; sequence VLTVNGPRKQAPGPERTIPITREEKPAVTAAPKK. Position 166 is an N6-acetyllysine (K166). O-linked (GlcNAc) threonine glycosylation occurs at T170.

This sequence belongs to the small heat shock protein (HSP20) family. Heteromer composed of three CRYAA and one CRYAB subunits. Aggregates with homologous proteins, including the small heat shock protein HSPB1, to form large heteromeric complexes. Inter-subunit bridging via zinc ions enhances stability, which is crucial as there is no protein turn over in the lens. Interacts with HSPBAP1 and TTN/titin. Interacts with TMEM109; in the cellular response to DNA damage. Interacts with DES; binds rapidly during early stages of DES filament assembly and a reduced binding seen in the later stages. Interacts with TMED10; the interaction mediates the translocation from the cytoplasm into the ERGIC (endoplasmic reticulum-Golgi intermediate compartment) and thereby secretion. Interacts with ATP6V1A and with MTOR, forming a ternary complex. As to expression, lens as well as other tissues.

Its subcellular location is the cytoplasm. The protein localises to the nucleus. It is found in the secreted. The protein resides in the lysosome. May contribute to the transparency and refractive index of the lens. Has chaperone-like activity, preventing aggregation of various proteins under a wide range of stress conditions. In lens epithelial cells, stabilizes the ATP6V1A protein, preventing its degradation by the proteasome. The chain is Alpha-crystallin B chain (CRYAB) from Oryctolagus cuniculus (Rabbit).